Consider the following 365-residue polypeptide: MQNSLPTQTYQSQLNEKTERLQKMMAPFNAPNVEVFSSPEQHYRMRAEFRIWHEQDALYHIMFDQETKQRIRVDQFPVASQLINQMMVALLAEIKDKPTLRHKLFQIDYLSTLSNKIIVSLLYHKKIDETWQQEATALRQTLIAQGFDVQLIGRAYKTKIMLDNDFVDEVLPVAGQQMIYRQVENSFTQPNAQVNIKMLEWALSVTENSTGDLLELYCGNGNFSLALARNFKRVLATEIAKPSVHAAQYNIAMNHIDNVKIIRMSAEDFTQAMNGVREFKRLEGINLQDYQCETIFVDPPRSGLDEKTVELVKNYSRILYISCNPQTLCQNLETLIKTHKISKLALFDQFPYTHHMECGVLLEKR.

The S-adenosyl-L-methionine site is built by Gln189, Tyr217, Asn222, Glu238, and Asp298. The active-site Nucleophile is Cys323. Glu357 serves as the catalytic Proton acceptor.

The protein belongs to the class I-like SAM-binding methyltransferase superfamily. RNA M5U methyltransferase family. TrmA subfamily.

It carries out the reaction uridine(54) in tRNA + S-adenosyl-L-methionine = 5-methyluridine(54) in tRNA + S-adenosyl-L-homocysteine + H(+). It catalyses the reaction uridine(341) in tmRNA + S-adenosyl-L-methionine = 5-methyluridine(341) in tmRNA + S-adenosyl-L-homocysteine + H(+). Functionally, dual-specificity methyltransferase that catalyzes the formation of 5-methyluridine at position 54 (m5U54) in all tRNAs, and that of position 341 (m5U341) in tmRNA (transfer-mRNA). The polypeptide is tRNA/tmRNA (uracil-C(5))-methyltransferase (Proteus mirabilis (strain HI4320)).